The chain runs to 517 residues: Gamma-1-syntrophin (517 aa).

The 84-residue stretch at 57-140 folds into the PDZ domain; that stretch reads TVTIRRQTVG…EVTLTVSFLK (84 aa). The PH domain maps to 283–390; that stretch reads QIVYMGWCEA…WERAFQTATF (108 aa).

It belongs to the syntrophin family. As to quaternary structure, isoform 1, but not isoform 2, interacts with the dystrophin protein DMD and related proteins DTNA and DTNB. Interacts with DGKZ. Brain specific. In CNS, it is expressed in the perikaryon and proximal portion of the neuronal processes. Strong expression in the hippocampus, neuron-rich dendate granule cells, and pyramidal cell layers. Highly expressed in neurons of the cerebral cortex. Also expressed in the cerebellar cortex, deep cerebellar nuclei, thalamus, and basal ganglia. No expression in muscle cells.

Its subcellular location is the cytoplasm. The protein localises to the cytoskeleton. It is found in the nucleus. Its function is as follows. Adapter protein that binds to and probably organizes the subcellular localization of a variety of proteins. May link various receptors to the actin cytoskeleton and the dystrophin glycoprotein complex. May participate in regulating the subcellular location of diacylglycerol kinase-zeta to ensure that diacylglycerol is rapidly inactivated following receptor activation. This Homo sapiens (Human) protein is Gamma-1-syntrophin (SNTG1).